The sequence spans 153 residues: Large ribosomal subunit protein bL27m (153 aa).

The N-terminal 37 residues, Met1–Ser37, are a transit peptide targeting the mitochondrion. A disordered region spans residues Ile34–Gly57.

It belongs to the bacterial ribosomal protein bL27 family. In terms of assembly, component of the mitochondrial large ribosomal subunit (mt-LSU). Mature yeast 74S mitochondrial ribosomes consist of a small (37S) and a large (54S) subunit. The 37S small subunit contains a 15S ribosomal RNA (15S mt-rRNA) and at least 32 different proteins. The 54S large subunit contains a 21S rRNA (21S mt-rRNA) and at least 45 different proteins.

The protein localises to the mitochondrion. Functionally, component of the mitochondrial ribosome (mitoribosome), a dedicated translation machinery responsible for the synthesis of mitochondrial genome-encoded proteins, including at least some of the essential transmembrane subunits of the mitochondrial respiratory chain. The mitoribosomes are attached to the mitochondrial inner membrane and translation products are cotranslationally integrated into the membrane. The chain is Large ribosomal subunit protein bL27m (mrp7) from Schizosaccharomyces pombe (strain 972 / ATCC 24843) (Fission yeast).